The chain runs to 122 residues: MIQTQSMLDVADNSGARRVMCIKVLGGSHRRYAGIGDIIKVTVKEAIPRGKVKKGQVMTAVVVRTRHGVRRADGSIIRFDGNAAVLLNNKQEPIGTRIFGPVTRELRSEKFMKIVSLAPEVL.

The protein belongs to the universal ribosomal protein uL14 family. In terms of assembly, part of the 50S ribosomal subunit. Forms a cluster with proteins L3 and L19. In the 70S ribosome, L14 and L19 interact and together make contacts with the 16S rRNA in bridges B5 and B8.

Binds to 23S rRNA. Forms part of two intersubunit bridges in the 70S ribosome. The protein is Large ribosomal subunit protein uL14 of Ectopseudomonas mendocina (strain ymp) (Pseudomonas mendocina).